A 273-amino-acid chain; its full sequence is MTDRYAVFGNPISHSKSPLIHGIFANETQQVLDYEAILAPKDGFESCLKLFWSQNGKGANVTAPFKEQAFNLCDELSEEAKLAGAVNTLTLLTNGKVRGDNTDGLGLVADLIRNISSLEGKRVLLLGAGGAARGSVLPLLKAGLKVYIHNRTQEKAEKLVEIFTPFGDVKALSIAELIAPFDIIINSTSSSLSGDVPAIPSCVIGVESLCYDMMYSKEMTSFNSWALELGAVKAIDGLGMLVGQAAKSFELWRGVTPEVDTTIKLLREKIKSE.

Shikimate is bound by residues 15–17 (SKS) and T62. K66 serves as the catalytic Proton acceptor. Position 78 (E78) interacts with NADP(+). The shikimate site is built by N87 and D103. Residues 127–131 (GAGGA), 150–155 (NRTQEK), and M213 each bind NADP(+). Y215 serves as a coordination point for shikimate. G237 is a binding site for NADP(+).

This sequence belongs to the shikimate dehydrogenase family. Homodimer.

It catalyses the reaction shikimate + NADP(+) = 3-dehydroshikimate + NADPH + H(+). Its pathway is metabolic intermediate biosynthesis; chorismate biosynthesis; chorismate from D-erythrose 4-phosphate and phosphoenolpyruvate: step 4/7. Its function is as follows. Involved in the biosynthesis of the chorismate, which leads to the biosynthesis of aromatic amino acids. Catalyzes the reversible NADPH linked reduction of 3-dehydroshikimate (DHSA) to yield shikimate (SA). The protein is Shikimate dehydrogenase (NADP(+)) of Shewanella woodyi (strain ATCC 51908 / MS32).